A 231-amino-acid chain; its full sequence is Flagellar L-ring protein (231 aa).

The first 18 residues, 1–18, serve as a signal peptide directing secretion; the sequence is MKHLLSVFALGGAVLLAG. Cysteine 19 carries the N-palmitoyl cysteine lipid modification. The S-diacylglycerol cysteine moiety is linked to residue cysteine 19.

The protein belongs to the FlgH family. In terms of assembly, the basal body constitutes a major portion of the flagellar organelle and consists of four rings (L,P,S, and M) mounted on a central rod.

The protein resides in the cell outer membrane. Its subcellular location is the bacterial flagellum basal body. In terms of biological role, assembles around the rod to form the L-ring and probably protects the motor/basal body from shearing forces during rotation. The polypeptide is Flagellar L-ring protein (Pseudomonas entomophila (strain L48)).